Here is a 526-residue protein sequence, read N- to C-terminus: Tyrosine-protein kinase transforming protein Src (526 aa).

The disordered stretch occupies residues 1 to 57 (MGSSKSKPKDPSQRRCSLEPPDSTHHGGFPASQTPNKTAAPDTHRTPSRSFGTVATE). G2 is lipidated: N-myristoyl glycine; by host. Basic and acidic residues predominate over residues 7–25 (KPKDPSQRRCSLEPPDSTH). Residues 81 to 142 (GGVTTFVALY…PSNYVAPSDS (62 aa)) enclose the SH3 domain. An SH2 domain is found at 148–245 (WYFGKITRRE…GLCHRLTNVC (98 aa)). The Protein kinase domain maps to 267–517 (LRLEVKLGQG…TFEYLQAQLL (251 aa)). ATP is bound by residues 273–281 (LGQGCFGEV) and K295. D386 serves as the catalytic Proton acceptor. Y416 is modified (phosphotyrosine; by autocatalysis).

Belongs to the protein kinase superfamily. Tyr protein kinase family. SRC subfamily. Post-translationally, the phosphorylated form is termed pp60v-src.

It carries out the reaction L-tyrosyl-[protein] + ATP = O-phospho-L-tyrosyl-[protein] + ADP + H(+). In terms of biological role, this phosphoprotein, required for both the initiation and the maintenance of neoplastic transformation, is a protein kinase that catalyzes the phosphorylation of tyrosine residues in vitro. This chain is Tyrosine-protein kinase transforming protein Src (V-SRC), found in Galliformes.